The following is a 131-amino-acid chain: MASRMGMVAIVSLFVCALAASTSVNANVWQTDDIPVVNSNMVRHSNMERQQQQGGFIGHRPRLASFNRASNQDGDRKRTVPSGPDHMHHSIPSHTPQHPPVYVQALYEDDRSRTSSGPSKSIGPPPLSDRY.

The N-terminal stretch at 1 to 26 is a signal peptide; sequence MASRMGMVAIVSLFVCALAASTSVNA. Positions 49–131 are disordered; it reads RQQQQGGFIG…IGPPPLSDRY (83 aa). Residues P81 and P84 each carry the hydroxyproline modification. P84 is a glycosylation site (O-linked (Ara...) hydroxyproline).

Belongs to the CLV3/ESR signal peptide family. Post-translationally, the O-glycosylation (arabinosylation) of the hydroxyproline Pro-84 enhances binding affinity of the ESR1p peptide for its receptor. As to expression, seed endosperm.

The protein resides in the secreted. It is found in the extracellular space. Its function is as follows. Extracellular signal peptide that regulates cell fate. This chain is CLAVATA3/ESR (CLE)-related protein ESR1, found in Zea mays (Maize).